Here is a 600-residue protein sequence, read N- to C-terminus: Aspartate--tRNA(Asp/Asn) ligase (600 aa).

L-aspartate is bound at residue glutamate 174. Residues 198-201 form an aspartate region; that stretch reads QLFK. Arginine 220 lines the L-aspartate pocket. Residues 220–222 and glutamine 229 each bind ATP; that span reads RDE. Residue histidine 457 participates in L-aspartate binding. An ATP-binding site is contributed by glutamate 491. Arginine 498 is an L-aspartate binding site. 543 to 546 provides a ligand contact to ATP; the sequence is GLDR.

Belongs to the class-II aminoacyl-tRNA synthetase family. Type 1 subfamily. As to quaternary structure, homodimer.

The protein localises to the cytoplasm. It catalyses the reaction tRNA(Asx) + L-aspartate + ATP = L-aspartyl-tRNA(Asx) + AMP + diphosphate. In terms of biological role, aspartyl-tRNA synthetase with relaxed tRNA specificity since it is able to aspartylate not only its cognate tRNA(Asp) but also tRNA(Asn). Reaction proceeds in two steps: L-aspartate is first activated by ATP to form Asp-AMP and then transferred to the acceptor end of tRNA(Asp/Asn). This Burkholderia orbicola (strain AU 1054) protein is Aspartate--tRNA(Asp/Asn) ligase.